Here is a 233-residue protein sequence, read N- to C-terminus: 7-cyano-7-deazaguanine synthase (233 aa).

11–21 (LSGGLDSSTVL) lines the ATP pocket. Residues C195, C203, C206, and C209 each coordinate Zn(2+).

This sequence belongs to the QueC family. The cofactor is Zn(2+).

It carries out the reaction 7-carboxy-7-deazaguanine + NH4(+) + ATP = 7-cyano-7-deazaguanine + ADP + phosphate + H2O + H(+). It participates in purine metabolism; 7-cyano-7-deazaguanine biosynthesis. Its function is as follows. Catalyzes the ATP-dependent conversion of 7-carboxy-7-deazaguanine (CDG) to 7-cyano-7-deazaguanine (preQ(0)). This Thermosynechococcus vestitus (strain NIES-2133 / IAM M-273 / BP-1) protein is 7-cyano-7-deazaguanine synthase.